The primary structure comprises 265 residues: Protein synthesis inhibitor PD-S2 (265 aa).

Intrachain disulfides connect C34/C262 and C88/C110. N120 carries an N-linked (GlcNAc...) asparagine glycan.

It belongs to the ribosome-inactivating protein family. Type 1 RIP subfamily. Glycosylated. In terms of tissue distribution, seeds.

The enzyme catalyses Endohydrolysis of the N-glycosidic bond at one specific adenosine on the 28S rRNA.. Functionally, inhibits protein synthesis in animal cells. Useful as immunotoxin for pharmacological applications. The sequence is that of Protein synthesis inhibitor PD-S2 from Phytolacca dioica (Bella sombra tree).